A 276-amino-acid chain; its full sequence is 4-chlorobenzoyl coenzyme A dehalogenase-1 (276 aa).

Residue 66–71 coordinates substrate; that stretch reads AGFDLE. H93 serves as the catalytic Proton acceptor. G117 lines the substrate pocket. D148 acts as the Nucleophile in catalysis. R261 lines the substrate pocket.

The protein belongs to the enoyl-CoA hydratase/isomerase family. As to quaternary structure, homotetramer.

It catalyses the reaction 4-chlorobenzoyl-CoA + H2O = 4-hydroxybenzoyl-CoA + chloride + H(+). It functions in the pathway xenobiotic degradation; 4-chlorobenzoate degradation; 4-hydroxybenzoate from 4-chlorobenzoate: step 2/3. Its function is as follows. Dehalogenates 4-chlorobenzoyl-CoA, 4-iodobenzoyl-CoA, 4-bromobenzoyl-CoA and, at a slower rate, 4-fluorobenzoyl-CoA. Does not dehalogenate 2-chlorobenzoyl-CoA or 3-chlorobenzoyl-CoA. The protein is 4-chlorobenzoyl coenzyme A dehalogenase-1 of Arthrobacter sp.